Here is a 166-residue protein sequence, read N- to C-terminus: Eukaryotic translation initiation factor 5A (166 aa).

The tract at residues 1–21 (MSDEDHDFSHQGGGDNASKTY) is disordered. The residue at position 53 (lysine 53) is a Hypusine. Residues 101 to 121 (EDPSLPSHLSLMDDEGESRED) form a disordered region. Residues 112 to 121 (MDDEGESRED) are compositionally biased toward acidic residues.

Belongs to the eIF-5A family. In terms of processing, lys-53 undergoes hypusination, a unique post-translational modification that consists in the addition of a butylamino group from spermidine to lysine side chain, leading to the formation of the unusual amino acid hypusine. eIF-5As are the only known proteins to undergo this modification, which is essential for their function.

The protein resides in the cytoplasm. Functionally, translation factor that promotes translation elongation and termination, particularly upon ribosome stalling at specific amino acid sequence contexts. Binds between the exit (E) and peptidyl (P) site of the ribosome and promotes rescue of stalled ribosome: specifically required for efficient translation of polyproline-containing peptides as well as other motifs that stall the ribosome. Acts as a ribosome quality control (RQC) cofactor by joining the RQC complex to facilitate peptidyl transfer during CAT tailing step. This is Eukaryotic translation initiation factor 5A from Leishmania donovani.